A 188-amino-acid polypeptide reads, in one-letter code: Large ribosomal subunit protein eL18 (188 aa).

The segment at 147–188 (EANKHFGPAPGVPHSHTKAHVRSKGRQFERARGRRTSKGYKK) is disordered. Basic residues-rich tracts occupy residues 161–171 (SHTKAHVRSKG) and 178–188 (RGRRTSKGYKK).

This sequence belongs to the eukaryotic ribosomal protein eL18 family.

Its subcellular location is the cytoplasm. This is Large ribosomal subunit protein eL18 (RpL18) from Diaphorina citri (Asian citrus psyllid).